The sequence spans 397 residues: Acetate kinase (397 aa).

A Mg(2+)-binding site is contributed by asparagine 8. An ATP-binding site is contributed by lysine 15. Substrate is bound at residue arginine 89. Aspartate 146 functions as the Proton donor/acceptor in the catalytic mechanism. ATP is bound by residues 206–210 (HLGNG), 281–283 (DLR), and 329–333 (GIGEN). Glutamate 382 is a binding site for Mg(2+).

The protein belongs to the acetokinase family. As to quaternary structure, homodimer. The cofactor is Mg(2+). It depends on Mn(2+) as a cofactor.

The protein resides in the cytoplasm. The catalysed reaction is acetate + ATP = acetyl phosphate + ADP. The protein operates within metabolic intermediate biosynthesis; acetyl-CoA biosynthesis; acetyl-CoA from acetate: step 1/2. Catalyzes the formation of acetyl phosphate from acetate and ATP. Can also catalyze the reverse reaction. This is Acetate kinase from Bacillus cytotoxicus (strain DSM 22905 / CIP 110041 / 391-98 / NVH 391-98).